Reading from the N-terminus, the 61-residue chain is Small ribosomal subunit protein uS14 (61 aa).

Positions 24, 27, 40, and 43 each coordinate Zn(2+).

Belongs to the universal ribosomal protein uS14 family. Zinc-binding uS14 subfamily. Part of the 30S ribosomal subunit. Contacts proteins S3 and S10. Zn(2+) serves as cofactor.

Functionally, binds 16S rRNA, required for the assembly of 30S particles and may also be responsible for determining the conformation of the 16S rRNA at the A site. In Thermosipho africanus (strain TCF52B), this protein is Small ribosomal subunit protein uS14.